Consider the following 544-residue polypeptide: CTP synthase (544 aa).

Residues Met1–Leu265 form an amidoligase domain region. Ser13 contributes to the CTP binding site. Ser13 contributes to the UTP binding site. Residues Ser14–Ile19 and Asp71 contribute to the ATP site. The Mg(2+) site is built by Asp71 and Glu139. Residues Asp146–Glu148, Lys186–Gln191, and Lys222 contribute to the CTP site. UTP-binding positions include Lys186 to Gln191 and Lys222. The Glutamine amidotransferase type-1 domain maps to Lys290–Ala544. Position 353 (Gly353) interacts with L-glutamine. Cys380 functions as the Nucleophile; for glutamine hydrolysis in the catalytic mechanism. L-glutamine-binding positions include Leu381–Gln384, Glu404, and Arg471. Residues His517 and Glu519 contribute to the active site.

This sequence belongs to the CTP synthase family. As to quaternary structure, homotetramer.

The enzyme catalyses UTP + L-glutamine + ATP + H2O = CTP + L-glutamate + ADP + phosphate + 2 H(+). It catalyses the reaction L-glutamine + H2O = L-glutamate + NH4(+). It carries out the reaction UTP + NH4(+) + ATP = CTP + ADP + phosphate + 2 H(+). Its pathway is pyrimidine metabolism; CTP biosynthesis via de novo pathway; CTP from UDP: step 2/2. With respect to regulation, allosterically activated by GTP, when glutamine is the substrate; GTP has no effect on the reaction when ammonia is the substrate. The allosteric effector GTP functions by stabilizing the protein conformation that binds the tetrahedral intermediate(s) formed during glutamine hydrolysis. Inhibited by the product CTP, via allosteric rather than competitive inhibition. Functionally, catalyzes the ATP-dependent amination of UTP to CTP with either L-glutamine or ammonia as the source of nitrogen. Regulates intracellular CTP levels through interactions with the four ribonucleotide triphosphates. This is CTP synthase from Neisseria meningitidis serogroup C (strain 053442).